Consider the following 206-residue polypeptide: Probable N-acetyltransferase 14 (206 aa).

Positions 6-206 constitute an N-acetyltransferase domain; the sequence is LSVREMREDE…MLVREFSKDL (201 aa). Residues 57–77 form a helical membrane-spanning segment; it reads FILASFALALLLPVFLAVAAV.

Belongs to the camello family.

Its subcellular location is the membrane. In terms of biological role, probable acetyltransferase that binds the 5'-GGACTACAG-3' sequence of coproporphyrinogen oxidase promoter. Able to activate transcription of a reporter construct in vitro. Functionally, probable acetyltransferase. Its function is as follows. May act as a transcription factor regulating the expression of coproporphyrinogen oxidase by binding to a promoter regulatory element. This is Probable N-acetyltransferase 14 (Nat14) from Mus musculus (Mouse).